The following is a 478-amino-acid chain: Lysine-rich nucleolar protein 1 (478 aa).

The tract at residues 1 to 231 (MVSKTQKADL…THQEGDILLV (231 aa)) is disordered. A Glycyl lysine isopeptide (Lys-Gly) (interchain with G-Cter in SUMO2) cross-link involves residue lysine 7. Residues 17-27 (KKKKKKKKKRV) are compositionally biased toward basic residues. Residues 33 to 45 (EPETQYSVLNSND) show a composition bias toward polar residues. Serine 51 and serine 59 each carry phosphoserine. Residues 54-63 (RATSPSNNVD) show a composition bias toward polar residues. Basic residues-rich tracts occupy residues 73 to 82 (SKRKKKKKSC) and 120 to 129 (EKKKKRRKSL). Lysine 140 is covalently cross-linked (Glycyl lysine isopeptide (Lys-Gly) (interchain with G-Cter in SUMO2)). Phosphoserine is present on serine 142. The span at 143 to 153 (PDPKHAKEVSK) shows a compositional bias: basic and acidic residues. Basic residues-rich tracts occupy residues 154 to 165 (AGRKSKKQRKEK) and 204 to 222 (QKRK…KKKT). Lysine 250 participates in a covalent cross-link: Glycyl lysine isopeptide (Lys-Gly) (interchain with G-Cter in SUMO1); alternate. Lysine 250 is covalently cross-linked (Glycyl lysine isopeptide (Lys-Gly) (interchain with G-Cter in SUMO2); alternate). Residues 258–314 (PIDSPKAPGKKKVKSKKKVEQPVGEGLAVKRKKKKKKRKENGVKEDPWQEEKEESDT) form a disordered region. Serine 261 is subject to Phosphoserine. Residues 265–274 (PGKKKVKSKK) are compositionally biased toward basic residues. Glycyl lysine isopeptide (Lys-Gly) (interchain with G-Cter in SUMO2) cross-links involve residues lysine 275 and lysine 287. Basic residues predominate over residues 286 to 296 (VKRKKKKKKRK). A compositionally biased stretch (basic and acidic residues) spans 297–307 (ENGVKEDPWQE). Lysine 309 participates in a covalent cross-link: Glycyl lysine isopeptide (Lys-Gly) (interchain with G-Cter in SUMO2). The segment at 310–478 (EESDTDLEVV…NASKSIKLQD (169 aa)) is interaction with ZNF106. At serine 312 the chain carries Phosphoserine. Phosphothreonine is present on threonine 314. A Glycyl lysine isopeptide (Lys-Gly) (interchain with G-Cter in SUMO2) cross-link involves residue lysine 323. Over residues 340–357 (QEEIDRESGKTEASEPKK) the composition is skewed to basic and acidic residues. The disordered stretch occupies residues 340-378 (QEEIDRESGKTEASEPKKWTVGLSVKTEASEPKKWTGTQ). Glycyl lysine isopeptide (Lys-Gly) (interchain with G-Cter in SUMO2) cross-links involve residues lysine 373, lysine 393, lysine 395, lysine 427, and lysine 462.

As to quaternary structure, interacts with ZNF106. Expressed in testis.

The protein resides in the nucleus. The protein localises to the nucleolus. The protein is Lysine-rich nucleolar protein 1 (Knop1) of Mus musculus (Mouse).